The sequence spans 590 residues: Arginine--tRNA ligase (590 aa).

A 'HIGH' region motif is present at residues 138–148; sequence ANPTGPLHIGH.

Belongs to the class-I aminoacyl-tRNA synthetase family. As to quaternary structure, monomer.

It is found in the cytoplasm. The enzyme catalyses tRNA(Arg) + L-arginine + ATP = L-arginyl-tRNA(Arg) + AMP + diphosphate. This is Arginine--tRNA ligase from Orientia tsutsugamushi (strain Ikeda) (Rickettsia tsutsugamushi).